The following is a 328-amino-acid chain: Malate dehydrogenase (328 aa).

An NAD(+)-binding site is contributed by 11–17 (GAAGQIG). Residues R94 and R100 each contribute to the substrate site. Residues N107, Q114, and 131-133 (VGN) each bind NAD(+). Substrate is bound by residues N133 and R164. H189 (proton acceptor) is an active-site residue.

The protein belongs to the LDH/MDH superfamily. MDH type 2 family.

The catalysed reaction is (S)-malate + NAD(+) = oxaloacetate + NADH + H(+). Catalyzes the reversible oxidation of malate to oxaloacetate. This chain is Malate dehydrogenase, found in Acinetobacter baumannii (strain AB0057).